A 225-amino-acid chain; its full sequence is NAD(P)H-quinone oxidoreductase subunit K, chloroplastic (225 aa).

Residues cysteine 43, cysteine 44, cysteine 108, and cysteine 139 each contribute to the [4Fe-4S] cluster site.

This sequence belongs to the complex I 20 kDa subunit family. NDH is composed of at least 16 different subunits, 5 of which are encoded in the nucleus. The cofactor is [4Fe-4S] cluster.

It is found in the plastid. It localises to the chloroplast thylakoid membrane. The catalysed reaction is a plastoquinone + NADH + (n+1) H(+)(in) = a plastoquinol + NAD(+) + n H(+)(out). It catalyses the reaction a plastoquinone + NADPH + (n+1) H(+)(in) = a plastoquinol + NADP(+) + n H(+)(out). Its function is as follows. NDH shuttles electrons from NAD(P)H:plastoquinone, via FMN and iron-sulfur (Fe-S) centers, to quinones in the photosynthetic chain and possibly in a chloroplast respiratory chain. The immediate electron acceptor for the enzyme in this species is believed to be plastoquinone. Couples the redox reaction to proton translocation, and thus conserves the redox energy in a proton gradient. In Populus alba (White poplar), this protein is NAD(P)H-quinone oxidoreductase subunit K, chloroplastic.